The chain runs to 113 residues: Hydrogenase maturation factor HypA (113 aa).

His-2 is a binding site for Ni(2+). 4 residues coordinate Zn(2+): Cys-73, Cys-76, Cys-89, and Cys-92.

The protein belongs to the HypA/HybF family.

Its function is as follows. Involved in the maturation of [NiFe] hydrogenases. Required for nickel insertion into the metal center of the hydrogenase. This chain is Hydrogenase maturation factor HypA, found in Acidithiobacillus ferrooxidans (strain ATCC 23270 / DSM 14882 / CIP 104768 / NCIMB 8455) (Ferrobacillus ferrooxidans (strain ATCC 23270)).